Consider the following 577-residue polypeptide: F-box/TPR repeat protein pof3 (577 aa).

3 TPR repeats span residues 6 to 39 (VKAIKEKTQQYLSKRKFEDALTFITKTIEQEPNP), 41 to 74 (IDLFELRAQVYEKSGQYSQAELDAKRMIHLNARN), and 76 to 108 (RGYLRLGKLLQLDGFDKKADQLYTQGLRMVHKM). One can recognise an F-box domain in the interval 138-180 (ILPREVLLCILQQLNFKSIVQCMQVCKHWRDCIKKEPSLFCCL).

In terms of assembly, a part of the E3 ubiquitin ligase Skp1-Cullin-1-F-box (SCF) complex. Interacts with cul1, mcl1 and skp1.

The protein resides in the mitochondrion. Its subcellular location is the nucleus. Functionally, has a role in substrate recognition in the Skp1-Cullin-1/Cdc53-F-box (SCF) ubiquitin ligase complex. Required for the maintenance of telomere length and transcriptional silencing at the telomere. Also required for chromosome segregation. The chain is F-box/TPR repeat protein pof3 (pof3) from Schizosaccharomyces pombe (strain 972 / ATCC 24843) (Fission yeast).